A 396-amino-acid polypeptide reads, in one-letter code: MYQIGEALIGEGNEVAHIDLLIGDKNGPVGIAFANGMTQLSMGHTPLLAVVRPNLIPKPATLIVPKVTVKNMGQAAQIFGPAQAAVAKAVADAVEEGVVPKDLCEDVVIIVSVFIHPEAQDPTKIYKYNYGATKLALTRAMEKFPGVDKVTYEKDRGVHAIMGYKITRLWDAPYLQIAIDAPDLGVVERVLKNVPKNDHLIIEAGTPLIKRYGLSVISKIREIRKDAFIVADLKTLDTGNLEARMAADNLADAVVCSGLAPIATIEKFIEEARKVGIYSIIDTLNVENPAKLIAALKVKPDIVELHRGIDTESQSAEHAWGNIPEIKKAAGGKKLLVAVAGGVKVENVETALKGGADILVVGRSITNAKDIEGESRRFLQAMKKDEIDQYRIMTDF.

Positions 1-161 (MYQIGEALIG…YEKDRGVHAI (161 aa)) are formaldehyde-activating enzyme. His17 acts as the Proton donor in catalysis. Asp19, Leu48, Lys66, Thr68, and Gln83 together coordinate substrate. Residues 162 to 396 (MGYKITRLWD…IDQYRIMTDF (235 aa)) are 3-hexulose-6-phosphate synthase.

This sequence in the N-terminal section; belongs to the formaldehyde-activating enzyme family. In the C-terminal section; belongs to the HPS/KGPDC family. HPS subfamily.

The catalysed reaction is 5,6,7,8-tetrahydromethanopterin + formaldehyde = 5,10-methylenetetrahydromethanopterin + H2O. The enzyme catalyses D-ribulose 5-phosphate + formaldehyde = D-arabino-hex-3-ulose 6-phosphate. Its pathway is carbohydrate biosynthesis; D-ribose 5-phosphate biosynthesis. Its function is as follows. Catalyzes the condensation of formaldehyde with tetrahydromethanopterin (H(4)MPT) to 5,10-methylenetetrahydromethanopterin. Catalyzes the reversible formation of ribulose-5-phosphate and formaldehyde from 3-hexulose-6-phosphate. This is Bifunctional enzyme Fae/Hps from Methanocella arvoryzae (strain DSM 22066 / NBRC 105507 / MRE50).